The primary structure comprises 153 residues: MFTESMLFLLLFLLLGLIAKNNSLIIAVAVVILLKLFHVDGKVMEMVQAKGINWGVTIITVAILIPIATGQIGFKDLIDSFKSAAGWIGLGAGIAVSILAKKGVSYMAVDPQVTVSLVFGTILAVVLFRGIAAGPVIAAGIAYMAMQLVAFIK.

4 helical membrane passes run 6-26 (MLFL…SLII), 54-74 (WGVT…QIGF), 80-100 (SFKS…SILA), and 117-137 (LVFG…GPVI).

The protein belongs to the UPF0756 family.

The protein resides in the cell membrane. The protein is UPF0756 membrane protein lwe1581 of Listeria welshimeri serovar 6b (strain ATCC 35897 / DSM 20650 / CCUG 15529 / CIP 8149 / NCTC 11857 / SLCC 5334 / V8).